A 163-amino-acid chain; its full sequence is Nucleotide-binding protein APJL_1242 (163 aa).

It belongs to the YajQ family.

Functionally, nucleotide-binding protein. This chain is Nucleotide-binding protein APJL_1242, found in Actinobacillus pleuropneumoniae serotype 3 (strain JL03).